The sequence spans 91 residues: Small ribosomal subunit protein uS19 (91 aa).

The protein belongs to the universal ribosomal protein uS19 family.

Protein S19 forms a complex with S13 that binds strongly to the 16S ribosomal RNA. In Azoarcus sp. (strain BH72), this protein is Small ribosomal subunit protein uS19.